The chain runs to 188 residues: Protein SSX1 (188 aa).

Disordered stretches follow at residues 1 to 22 (MNGDDTFAKRPRDDAKASEKRS) and 111 to 188 (IMPK…EDDE). The 64-residue stretch at 20-83 (KRSKAFDDIA…KQATDFQGND (64 aa)) folds into the KRAB-related domain. Over residues 115–125 (KPAEDENDSKG) the composition is skewed to basic and acidic residues. Ser123 bears the Phosphoserine mark. The span at 153–170 (KRSGPKRGKHAWTHRLRE) shows a compositional bias: basic residues. The span at 179–188 (EISDPEEDDE) shows a compositional bias: acidic residues.

Belongs to the SSX family. Expressed at high level in the testis. Expressed at low level in thyroid. Not detected in tonsil, colon, lung, spleen, prostate, kidney, striated and smooth muscles. Detected in rhabdomyosarcoma and fibrosarcoma cell lines. Not detected in mesenchymal and epithelial cell lines. Expressed in testis.

The protein localises to the cytoplasm. It localises to the cytoskeleton. The protein resides in the flagellum axoneme. In terms of biological role, could act as a modulator of transcription. Plays a role in spermatogenesis. The chain is Protein SSX1 (SSX1) from Homo sapiens (Human).